Here is a 264-residue protein sequence, read N- to C-terminus: Acyl-[acyl-carrier-protein]--UDP-N-acetylglucosamine O-acyltransferase (264 aa).

It belongs to the transferase hexapeptide repeat family. LpxA subfamily. In terms of assembly, homotrimer.

The protein localises to the cytoplasm. It catalyses the reaction a (3R)-hydroxyacyl-[ACP] + UDP-N-acetyl-alpha-D-glucosamine = a UDP-3-O-[(3R)-3-hydroxyacyl]-N-acetyl-alpha-D-glucosamine + holo-[ACP]. It participates in glycolipid biosynthesis; lipid IV(A) biosynthesis; lipid IV(A) from (3R)-3-hydroxytetradecanoyl-[acyl-carrier-protein] and UDP-N-acetyl-alpha-D-glucosamine: step 1/6. Involved in the biosynthesis of lipid A, a phosphorylated glycolipid that anchors the lipopolysaccharide to the outer membrane of the cell. This Leptothrix cholodnii (strain ATCC 51168 / LMG 8142 / SP-6) (Leptothrix discophora (strain SP-6)) protein is Acyl-[acyl-carrier-protein]--UDP-N-acetylglucosamine O-acyltransferase.